We begin with the raw amino-acid sequence, 341 residues long: Thromboxane A2 receptor (341 aa).

Residues 1–29 (MWPNGTSLGACFRPVNITLQERRAIASPW) are Extracellular-facing. Asn-4 and Asn-16 each carry an N-linked (GlcNAc...) asparagine glycan. The helical transmembrane segment at 30–52 (FAASFCALGLGSNLLALSVLAGA) threads the bilayer. Over 53–65 (RPGAGPRSSFLAL) the chain is Cytoplasmic. The helical transmembrane segment at 66–86 (LCGLVLTDFLGLLVTGAIVAS) threads the bilayer. At 87-105 (QHAALLDWRATDPSCRLCY) the chain is on the extracellular side. Residues Cys-104 and Cys-181 are joined by a disulfide bond. The chain crosses the membrane as a helical span at residues 106-127 (FMGVAMVFFGLCPLLLGAAMAS). Over 128–147 (ERFVGITRPFSRPTATSRRA) the chain is Cytoplasmic. A helical membrane pass occupies residues 148–170 (WATVGLVWVAAGALGLLPLLGLG). At 171 to 191 (RYSVQYPGSWCFLTLGTQRGD) the chain is on the extracellular side. A helical membrane pass occupies residues 192–217 (VVFGLIFALLGSASVGLSLLLNTVSV). Over 218 to 244 (ATLCRVYHTREATQRPRDCEVEMMVQL) the chain is Cytoplasmic. Residues 245–268 (VGIMVVATVCWMPLLVFIMQTLLQ) traverse the membrane as a helical segment. The Extracellular segment spans residues 269–287 (TPPVMSFSGQLLRATEHQL). Residues 288 to 309 (LIYLRVATWNQILDPWVYILFR) form a helical membrane-spanning segment. Residues 310 to 341 (RSVLRRLHPRFSSQLQAVSLRRPPAQAMLSGP) lie on the Cytoplasmic side of the membrane. Residue Ser-328 is modified to Phosphoserine.

This sequence belongs to the G-protein coupled receptor 1 family. Interacts with RPGRIP1L. Interacts with RACK1; the interaction regulates TBXA2R cell surface expression.

Its subcellular location is the cell membrane. Its function is as follows. Receptor for thromboxane A2 (TXA2), a potent stimulator of platelet aggregation. The activity of this receptor is mediated by a G-protein that activates a phosphatidylinositol-calcium second messenger system. In the kidney, the binding of TXA2 to glomerular TP receptors causes intense vasoconstriction. Activates phospholipase C and adenylyl cyclase. This is Thromboxane A2 receptor (Tbxa2r) from Mus musculus (Mouse).